The chain runs to 167 residues: Urease accessory protein UreE (167 aa).

This sequence belongs to the UreE family.

It localises to the cytoplasm. Its function is as follows. Involved in urease metallocenter assembly. Binds nickel. Probably functions as a nickel donor during metallocenter assembly. This chain is Urease accessory protein UreE, found in Pseudomonas aeruginosa (strain UCBPP-PA14).